We begin with the raw amino-acid sequence, 186 residues long: DNA-directed RNA polymerase 22 kDa subunit (186 aa).

It belongs to the poxviridae DNA-directed RNA polymerase 22 kDa subunit family. The DNA-dependent RNA polymerase used for intermediate and late genes expression consists of eight subunits Rpo30/OPG66, Rpo7/OPG90, Rpo22/OPG103, Rpo147/OPG105, Rpo18/OPG119, Rpo19/OPG131, Rpo132/OPG151 and Rpo35/OPG156. The same holoenzyme, with the addition of the transcription-specificity factor OPG109, is used for early gene expression.

It is found in the virion. The enzyme catalyses RNA(n) + a ribonucleoside 5'-triphosphate = RNA(n+1) + diphosphate. In terms of biological role, part of the DNA-dependent RNA polymerase which catalyzes the transcription of viral DNA into RNA using the four ribonucleoside triphosphates as substrates. Responsible for the transcription of early, intermediate and late genes. DNA-dependent RNA polymerase associates with the early transcription factor (ETF), itself composed of OPG118 and OPG133, thereby allowing the early genes transcription. Late transcription, and probably also intermediate transcription, require newly synthesized RNA polymerase. In Vertebrata (FPV), this protein is DNA-directed RNA polymerase 22 kDa subunit (OPG103).